The sequence spans 364 residues: Aminomethyltransferase (364 aa).

Belongs to the GcvT family. The glycine cleavage system is composed of four proteins: P, T, L and H.

The catalysed reaction is N(6)-[(R)-S(8)-aminomethyldihydrolipoyl]-L-lysyl-[protein] + (6S)-5,6,7,8-tetrahydrofolate = N(6)-[(R)-dihydrolipoyl]-L-lysyl-[protein] + (6R)-5,10-methylene-5,6,7,8-tetrahydrofolate + NH4(+). In terms of biological role, the glycine cleavage system catalyzes the degradation of glycine. In Shewanella baltica (strain OS155 / ATCC BAA-1091), this protein is Aminomethyltransferase.